A 229-amino-acid polypeptide reads, in one-letter code: Large ribosomal subunit protein uL1 (229 aa).

It belongs to the universal ribosomal protein uL1 family. In terms of assembly, part of the 50S ribosomal subunit.

Functionally, binds directly to 23S rRNA. The L1 stalk is quite mobile in the ribosome, and is involved in E site tRNA release. In terms of biological role, protein L1 is also a translational repressor protein, it controls the translation of the L11 operon by binding to its mRNA. This is Large ribosomal subunit protein uL1 from Clostridium beijerinckii (strain ATCC 51743 / NCIMB 8052) (Clostridium acetobutylicum).